We begin with the raw amino-acid sequence, 452 residues long: Caspase-2 (452 aa).

Residue alanine 2 is modified to N-acetylalanine. A propeptide spanning residues 2–169 is cleaved from the precursor; the sequence is AAPSAGSWST…TVEHSLDNKD (168 aa). Residues 32 to 121 enclose the CARD domain; it reads MHPHHQETLK…GHLEDMLLTT (90 aa). Phosphoserine is present on serine 157. Catalysis depends on residues histidine 277 and cysteine 320. A propeptide spanning residues 326-333 is cleaved from the precursor; that stretch reads DRGVDQQD. Basic and acidic residues predominate over residues 327–336; the sequence is RGVDQQDGKN. Residues 327–354 are disordered; the sequence is RGVDQQDGKNHAGSPGCEESDAGKEKLP. Phosphoserine is present on serine 340.

This sequence belongs to the peptidase C14A family. As to quaternary structure, heterotetramer that consists of two anti-parallel arranged heterodimers, each one formed by a p18 subunit and a p12 subunit. Forms a complex named the PIDDosome with PIDD1 and CRADD. Interacts with NOL3 (via CARD domain); inhibits CASP2 activity in a phosphorylation-dependent manner. In terms of processing, the mature protease can process its own propeptide, but not that of other caspases. As to expression, expressed at higher levels in the embryonic lung, liver and kidney than in the heart and brain. In adults, higher level expression is seen in the placenta, lung, kidney, and pancreas than in the heart, brain, liver and skeletal muscle.

It catalyses the reaction Strict requirement for an Asp residue at P1, with 316-Asp being essential for proteolytic activity and has a preferred cleavage sequence of Val-Asp-Val-Ala-Asp-|-.. In terms of biological role, is a regulator of the cascade of caspases responsible for apoptosis execution. Might function by either activating some proteins required for cell death or inactivating proteins necessary for cell survival. Associates with PIDD1 and CRADD to form the PIDDosome, a complex that activates CASP2 and triggers apoptosis in response to genotoxic stress. Functionally, acts as a positive regulator of apoptosis. Acts as a negative regulator of apoptosis. Its function is as follows. May function as an endogenous apoptosis inhibitor that antagonizes caspase activation and cell death. The polypeptide is Caspase-2 (CASP2) (Homo sapiens (Human)).